The primary structure comprises 117 residues: uncharacterized protein (117 aa).

The signal sequence occupies residues 1–24 (MMTEFGSAMTLVTGLVAYGAYVKS). Positions 42–117 (EKENFNYNNN…NNQIKRRLFD (76 aa)) are disordered. Over residues 46–95 (FNYNNNNNNNNNNNNNNSNNNDNNNNNNSNSNNNNNNNNNNNNNNNNNIN) the composition is skewed to low complexity. N-linked (GlcNAc...) asparagine glycans are attached at residues Asn61 and Asn72. Polar residues predominate over residues 96–110 (DKQINGTNIFDSNNQ).

Its subcellular location is the secreted. This is an uncharacterized protein from Dictyostelium discoideum (Social amoeba).